A 247-amino-acid chain; its full sequence is tRNA (guanine-N(1)-)-methyltransferase (247 aa).

Residues glycine 112 and 132-137 each bind S-adenosyl-L-methionine; that span reads IGDFVL.

Belongs to the RNA methyltransferase TrmD family. In terms of assembly, homodimer.

The protein resides in the cytoplasm. It carries out the reaction guanosine(37) in tRNA + S-adenosyl-L-methionine = N(1)-methylguanosine(37) in tRNA + S-adenosyl-L-homocysteine + H(+). Specifically methylates guanosine-37 in various tRNAs. The chain is tRNA (guanine-N(1)-)-methyltransferase from Geotalea uraniireducens (strain Rf4) (Geobacter uraniireducens).